Consider the following 248-residue polypeptide: Methyl-coenzyme M reductase subunit gamma (248 aa).

Residue arginine 121 participates in coenzyme M binding.

This sequence belongs to the methyl-coenzyme M reductase gamma subunit family. MCR is a hexamer of two alpha, two beta, and two gamma chains, forming a dimer of heterotrimers. The cofactor is coenzyme F430.

The protein resides in the cytoplasm. It catalyses the reaction coenzyme B + methyl-coenzyme M = methane + coenzyme M-coenzyme B heterodisulfide. Its pathway is one-carbon metabolism; methyl-coenzyme M reduction; methane from methyl-coenzyme M: step 1/1. Component of the methyl-coenzyme M reductase (MCR) I that catalyzes the reductive cleavage of methyl-coenzyme M (CoM-S-CH3 or 2-(methylthio)ethanesulfonate) using coenzyme B (CoB or 7-mercaptoheptanoylthreonine phosphate) as reductant which results in the production of methane and the mixed heterodisulfide of CoB and CoM (CoM-S-S-CoB). This is the final step in methanogenesis. The polypeptide is Methyl-coenzyme M reductase subunit gamma (mcrG) (Methanosarcina barkeri (strain Fusaro / DSM 804)).